The sequence spans 425 residues: Serine--tRNA ligase (425 aa).

230 to 232 (TAE) is a binding site for L-serine. Residue 261 to 263 (RQE) participates in ATP binding. Position 284 (glutamate 284) interacts with L-serine. 348 to 351 (EISS) contributes to the ATP binding site. L-serine is bound at residue serine 384.

The protein belongs to the class-II aminoacyl-tRNA synthetase family. Type-1 seryl-tRNA synthetase subfamily. Homodimer. The tRNA molecule binds across the dimer.

It localises to the cytoplasm. It carries out the reaction tRNA(Ser) + L-serine + ATP = L-seryl-tRNA(Ser) + AMP + diphosphate + H(+). The catalysed reaction is tRNA(Sec) + L-serine + ATP = L-seryl-tRNA(Sec) + AMP + diphosphate + H(+). It functions in the pathway aminoacyl-tRNA biosynthesis; selenocysteinyl-tRNA(Sec) biosynthesis; L-seryl-tRNA(Sec) from L-serine and tRNA(Sec): step 1/1. Functionally, catalyzes the attachment of serine to tRNA(Ser). Is also able to aminoacylate tRNA(Sec) with serine, to form the misacylated tRNA L-seryl-tRNA(Sec), which will be further converted into selenocysteinyl-tRNA(Sec). The polypeptide is Serine--tRNA ligase (Caldanaerobacter subterraneus subsp. tengcongensis (strain DSM 15242 / JCM 11007 / NBRC 100824 / MB4) (Thermoanaerobacter tengcongensis)).